The primary structure comprises 298 residues: DNA-binding transcriptional activator HetR (298 aa).

Serine 152 is a catalytic residue.

The protein belongs to the peptidase S48 family. In terms of assembly, homodimer; disulfide-linked.

Functionally, controls heterocyst differentiation. Dimerization is required for DNA-binding. Has both a protease and a DNA-binding activity. This Nostoc sp. (strain PCC 9229) protein is DNA-binding transcriptional activator HetR.